Here is a 355-residue protein sequence, read N- to C-terminus: Galactoside 2-alpha-L-fucosyltransferase (355 aa).

Over 1–15 (MRNVKGLFSYMTKTK) the chain is Cytoplasmic. A helical; Signal-anchor for type II membrane protein membrane pass occupies residues 16–36 (SFYISIIVIIFIIFIVNRMGP). Topologically, residues 37–355 (RNYNYKQIGT…MSRNGSIISK (319 aa)) are lumenal. 3 N-linked (GlcNAc...) asparagine glycosylation sites follow: N92, N311, and N349.

The protein belongs to the glycosyltransferase 11 family. In terms of tissue distribution, expression is restricted to the 20 intestinal cells in larvae and adult.

It localises to the golgi apparatus. Its subcellular location is the golgi stack membrane. The protein operates within protein modification; protein glycosylation. Selectively catalyzes the addition of fucose in alpha 1-2 linkage to Gal-beta-(1-&gt;4)-Xyl-beta-R, Gal-beta-(1-&gt;6)-GlcNAc-R, Gal-beta-(1-&gt;3)-Gal-beta-(1-&gt;4)-Glc and Gal-beta-(1-&gt;3)-Gal-beta-(1-&gt;4)-Xyl-R acceptors but not Gal-beta-(1-&gt;3)-GlcNAc-beta-(1-&gt;3)-Gal-beta-(1-&gt;4)-Glc. Unlike in mammals, unable to fucosylate Gal-beta-(1-&gt;4)-Glc-beta-R. This Caenorhabditis elegans protein is Galactoside 2-alpha-L-fucosyltransferase.